The following is a 283-amino-acid chain: tRNA pseudouridine synthase B (283 aa).

Residue Asp38 is the Nucleophile of the active site.

It belongs to the pseudouridine synthase TruB family. Type 1 subfamily.

The enzyme catalyses uridine(55) in tRNA = pseudouridine(55) in tRNA. Its function is as follows. Responsible for synthesis of pseudouridine from uracil-55 in the psi GC loop of transfer RNAs. The sequence is that of tRNA pseudouridine synthase B from Onion yellows phytoplasma (strain OY-M).